A 514-amino-acid chain; its full sequence is MTNIQAFMKNFLGASPEWYKLAIVVFLIINPIVFFFISPFIAGWLLVAEFIFTLAMALKCYPLQPGGLLAIEAIIIGMTNAKHVKAEIMANFEVILLLIFMVAGIFFMKQLLLYVFTKLLVKIRSKIALSIAFCFSAAFLSAFLDALTVVAVIISVAMGFYGVYHKVASGNNLIDAVDISDDRKIIEQQHEILEKFRAFLRSLMMHAGVGTALGGVMTVVGEPQNLIIAEQAKWNFMEFFLRMAPVTIPVFICGLLTCFLVEKFKLFGYGEKLPDEVWKVLSDLDRTNSEKMSKQDKIKLGMQALIAIWLILGLAFHLAAVGLIGLSIIIFATSFTGVTDEHTIGKAFQESLPFTALLVVFFSVVAVIIDQKLFSPIIHFVLSAEENTQLALFYLFNGLLSSISDNVFVATVYINEAKAALTNGVIAPHQFELLSVAINTGTNLPSVATPNGQAAFLFLLTSSISPLIRLSYGRMVYMALPYTIVLSIIGLLAIEFILPAATIWLASLGLILPI.

Helical transmembrane passes span 21–41 (LAIV…SPFI), 43–63 (GWLL…CYPL), 88–108 (IMAN…IFFM), 143–163 (FLDA…FYGV), 203–223 (LMMH…VGEP), 239–259 (FFLR…LTCF), 304–324 (ALIA…VGLI), 349–369 (QESL…AVII), 390–410 (LALF…VFVA), 448–468 (ATPN…SPLI), and 484–504 (IVLS…ATIW).

It belongs to the NhaB Na(+)/H(+) (TC 2.A.34) antiporter family.

It is found in the cell inner membrane. The catalysed reaction is 2 Na(+)(in) + 3 H(+)(out) = 2 Na(+)(out) + 3 H(+)(in). Na(+)/H(+) antiporter that extrudes sodium in exchange for external protons. The sequence is that of Na(+)/H(+) antiporter NhaB from Haemophilus influenzae (strain 86-028NP).